A 358-amino-acid polypeptide reads, in one-letter code: Glycerol-3-phosphate dehydrogenase [NAD(P)+] (358 aa).

NADPH is bound by residues S33, F34, R54, and K128. The sn-glycerol 3-phosphate site is built by K128 and G156. A160 contacts NADPH. 5 residues coordinate sn-glycerol 3-phosphate: K211, D264, S274, R275, and N276. K211 (proton acceptor) is an active-site residue. Residue R275 coordinates NADPH. NADPH-binding residues include V299 and E301.

Belongs to the NAD-dependent glycerol-3-phosphate dehydrogenase family.

The protein localises to the cytoplasm. The catalysed reaction is sn-glycerol 3-phosphate + NAD(+) = dihydroxyacetone phosphate + NADH + H(+). It catalyses the reaction sn-glycerol 3-phosphate + NADP(+) = dihydroxyacetone phosphate + NADPH + H(+). It functions in the pathway membrane lipid metabolism; glycerophospholipid metabolism. Catalyzes the reduction of the glycolytic intermediate dihydroxyacetone phosphate (DHAP) to sn-glycerol 3-phosphate (G3P), the key precursor for phospholipid synthesis. This chain is Glycerol-3-phosphate dehydrogenase [NAD(P)+], found in Saccharophagus degradans (strain 2-40 / ATCC 43961 / DSM 17024).